A 271-amino-acid polypeptide reads, in one-letter code: Phosphonoacetaldehyde hydrolase (271 aa).

Asp12 functions as the Nucleophile in the catalytic mechanism. Mg(2+) contacts are provided by Asp12 and Ala14. Lys54 serves as the catalytic Schiff-base intermediate with substrate. Asp188 lines the Mg(2+) pocket.

This sequence belongs to the HAD-like hydrolase superfamily. PhnX family. In terms of assembly, homodimer. Mg(2+) serves as cofactor.

It catalyses the reaction phosphonoacetaldehyde + H2O = acetaldehyde + phosphate + H(+). Involved in phosphonate degradation. This chain is Phosphonoacetaldehyde hydrolase, found in Vibrio cholerae serotype O1 (strain ATCC 39541 / Classical Ogawa 395 / O395).